The primary structure comprises 559 residues: Large neutral amino acids transporter small subunit 3 (559 aa).

The chain crosses the membrane as a helical span at residues 20–40 (VLENLFFSAVLLGWGSLLIIL). Residue N57 is glycosylated (N-linked (GlcNAc...) asparagine). The next 5 membrane-spanning stretches (helical) occupy residues 78–98 (LGFTIGSFVLSATTLPLGILM), 105–124 (PVRLVGSACFTASCTLMALA), 131–151 (LSPLIFLALSLNGFGGICLTF), 168–188 (MALMIGSYASSAITFPGIKLI), and 191–211 (AGVAFVVIMFTWSGLACLIFL). N212 and N229 each carry an N-linked (GlcNAc...) asparagine glycan. A phosphoserine mark is found at S237, S262, and S267. 6 helical membrane passes run 304–324 (FLWSLLTMGMTQLRIIFYMAA), 357–377 (SVFGAMQLLCLLTCPLIGYIM), 419–439 (AISAFTLTNLLLVGFGITCLI), 446–466 (FVTFVLHTIVRGFFHSACGSL), 485–505 (LISAVFALLQQPLFMAMVGPL), and 510–530 (FWVNLGLLLFSLLGFLLPSYL).

This sequence belongs to the SLC43A transporter (TC 2.A.1.44) family. As to expression, ubiquitously expressed in fetus and adult. Highest expression in adult pancreas, liver, skeletal muscle. In fetus, highest expression in liver and lower levels in kidney, and lung. Exclusively expressed in the glomeruli along the glomerular capillary walls.

It localises to the cell membrane. Its subcellular location is the apical cell membrane. The protein localises to the endoplasmic reticulum membrane. It catalyses the reaction D-leucine(in) = D-leucine(out). The enzyme catalyses L-leucine(in) = L-leucine(out). It carries out the reaction L-isoleucine(in) = L-isoleucine(out). The catalysed reaction is L-methionine(in) = L-methionine(out). It catalyses the reaction L-phenylalanine(in) = L-phenylalanine(out). The enzyme catalyses L-valine(in) = L-valine(out). In terms of biological role, uniport that mediates the transport of neutral amino acids such as L-leucine, L-isoleucine, L-valine, and L-phenylalanine. The transport activity is sodium ions-independent, electroneutral and mediated by a facilitated diffusion. This chain is Large neutral amino acids transporter small subunit 3, found in Homo sapiens (Human).